The primary structure comprises 651 residues: UvrABC system protein B (651 aa).

The Helicase ATP-binding domain maps to R25–L178. G38 to T45 contributes to the ATP binding site. The short motif at Y91–I114 is the Beta-hairpin element. Residues D427–V591 form the Helicase C-terminal domain. The segment at T593–A615 is disordered. One can recognise a UVR domain in the interval N616–P651.

This sequence belongs to the UvrB family. In terms of assembly, forms a heterotetramer with UvrA during the search for lesions. Interacts with UvrC in an incision complex.

The protein localises to the cytoplasm. Its function is as follows. The UvrABC repair system catalyzes the recognition and processing of DNA lesions. A damage recognition complex composed of 2 UvrA and 2 UvrB subunits scans DNA for abnormalities. Upon binding of the UvrA(2)B(2) complex to a putative damaged site, the DNA wraps around one UvrB monomer. DNA wrap is dependent on ATP binding by UvrB and probably causes local melting of the DNA helix, facilitating insertion of UvrB beta-hairpin between the DNA strands. Then UvrB probes one DNA strand for the presence of a lesion. If a lesion is found the UvrA subunits dissociate and the UvrB-DNA preincision complex is formed. This complex is subsequently bound by UvrC and the second UvrB is released. If no lesion is found, the DNA wraps around the other UvrB subunit that will check the other stand for damage. This Anaplasma marginale (strain Florida) protein is UvrABC system protein B.